The chain runs to 360 residues: GTPase Obg (360 aa).

Residues 1–156 form the Obg domain; sequence MFVDSVEIII…KCVRLELKLI (156 aa). Positions 157 to 360 constitute an OBG-type G domain; that stretch reads ADIGLVGFPN…LKFVLLKALQ (204 aa). GTP is bound by residues 163–170, 188–192, 210–213, 279–282, and 341–343; these read GFPNAGKS, FTTLV, DIPG, NKCD, and SAV. 2 residues coordinate Mg(2+): Ser-170 and Thr-190.

It belongs to the TRAFAC class OBG-HflX-like GTPase superfamily. OBG GTPase family. Monomer. Mg(2+) serves as cofactor.

Its subcellular location is the cytoplasm. Functionally, an essential GTPase which binds GTP, GDP and possibly (p)ppGpp with moderate affinity, with high nucleotide exchange rates and a fairly low GTP hydrolysis rate. Plays a role in control of the cell cycle, stress response, ribosome biogenesis and in those bacteria that undergo differentiation, in morphogenesis control. The chain is GTPase Obg from Helicobacter pylori (strain P12).